A 517-amino-acid polypeptide reads, in one-letter code: Protein BTN1 (517 aa).

The next 8 helical transmembrane spans lie at 24–44 (LFAA…IILS), 57–77 (GVVA…WPLL), 88–108 (VGFC…SSSL), 112–132 (LLGI…FLQL), 146–166 (LGAW…IWWL), 169–189 (GLGV…FPIT), 371–391 (PAII…TFFF), and 409–429 (SITI…SGYV).

Belongs to the battenin family.

The protein localises to the vacuole membrane. Involved in vacuolar transport and vacuole pH homeostasis. Also required for cytokinesis. The chain is Protein BTN1 (BTN1) from Cryptococcus neoformans var. neoformans serotype D (strain B-3501A) (Filobasidiella neoformans).